Consider the following 607-residue polypeptide: Elongation factor 4 (607 aa).

A tr-type G domain is found at 11-193; it reads KKIRNFSIIA…QIVELVPPPT (183 aa). GTP-binding positions include 23-28 and 140-143; these read DHGKST and NKID.

Belongs to the TRAFAC class translation factor GTPase superfamily. Classic translation factor GTPase family. LepA subfamily.

The protein localises to the cell membrane. It carries out the reaction GTP + H2O = GDP + phosphate + H(+). In terms of biological role, required for accurate and efficient protein synthesis under certain stress conditions. May act as a fidelity factor of the translation reaction, by catalyzing a one-codon backward translocation of tRNAs on improperly translocated ribosomes. Back-translocation proceeds from a post-translocation (POST) complex to a pre-translocation (PRE) complex, thus giving elongation factor G a second chance to translocate the tRNAs correctly. Binds to ribosomes in a GTP-dependent manner. This is Elongation factor 4 from Exiguobacterium sp. (strain ATCC BAA-1283 / AT1b).